A 129-amino-acid polypeptide reads, in one-letter code: Glycine cleavage system H protein (129 aa).

The Lipoyl-binding domain maps to L24–R106. K65 bears the N6-lipoyllysine mark.

This sequence belongs to the GcvH family. The glycine cleavage system is composed of four proteins: P, T, L and H. It depends on (R)-lipoate as a cofactor.

The glycine cleavage system catalyzes the degradation of glycine. The H protein shuttles the methylamine group of glycine from the P protein to the T protein. This chain is Glycine cleavage system H protein, found in Synechococcus sp. (strain CC9311).